Here is a 123-residue protein sequence, read N- to C-terminus: Glycine cleavage system H protein (123 aa).

Residues 22–104 (VATVGITSYA…FGAGWLVKVR (83 aa)) form the Lipoyl-binding domain. Lysine 63 bears the N6-lipoyllysine mark.

It belongs to the GcvH family. In terms of assembly, the glycine cleavage system is composed of four proteins: P, T, L and H. (R)-lipoate is required as a cofactor.

In terms of biological role, the glycine cleavage system catalyzes the degradation of glycine. The H protein shuttles the methylamine group of glycine from the P protein to the T protein. The protein is Glycine cleavage system H protein of Clavibacter sepedonicus (Clavibacter michiganensis subsp. sepedonicus).